Reading from the N-terminus, the 160-residue chain is M-phase phosphoprotein 6 (160 aa).

Glycyl lysine isopeptide (Lys-Gly) (interchain with G-Cter in SUMO2) cross-links involve residues Lys-37 and Lys-86. Ser-110 bears the Phosphoserine mark. A Nuclear localization signal motif is present at residues 116-133 (RRYETLVGTIGKKFARKR). Lys-127 is covalently cross-linked (Glycyl lysine isopeptide (Lys-Gly) (interchain with G-Cter in SUMO2)). Thr-147 is subject to Phosphothreonine. Residues Lys-150 and Lys-153 each participate in a glycyl lysine isopeptide (Lys-Gly) (interchain with G-Cter in SUMO2) cross-link.

It belongs to the MPP6 family. In terms of assembly, associates with the RNA exosome complex, mediated by EXOSC3. Interacts with ARHGAP18. Interacts with exosome cofactors EXOSC10 and MTREX. In terms of processing, phosphorylated in M (mitotic) phase.

It is found in the nucleus. Its subcellular location is the nucleolus. It localises to the cytoplasm. Its function is as follows. RNA-binding protein that associates with the RNA exosome complex. Involved in the 3'-processing of the 7S pre-RNA to the mature 5.8S rRNA and play a role in recruiting the RNA exosome complex to pre-rRNA; this function may include C1D. This Homo sapiens (Human) protein is M-phase phosphoprotein 6.